We begin with the raw amino-acid sequence, 50 residues long: Protein HokE (50 aa).

A helical transmembrane segment spans residues 5-25; that stretch reads YALVAVIVLCLTVLGFTLLVG.

Belongs to the Hok/Gef family.

It is found in the cell inner membrane. In terms of biological role, toxic component of a type I toxin-antitoxin (TA) system. When overexpressed kills cells within minutes; causes collapse of the transmembrane potential and arrest of respiration. Its toxic effect is probably neutralized by an antisense antitoxin Sok RNA. This Escherichia coli O157:H7 protein is Protein HokE (hokE).